Consider the following 199-residue polypeptide: Translation initiation factor IF-3 (199 aa).

The protein belongs to the IF-3 family. As to quaternary structure, monomer.

The protein localises to the cytoplasm. In terms of biological role, IF-3 binds to the 30S ribosomal subunit and shifts the equilibrium between 70S ribosomes and their 50S and 30S subunits in favor of the free subunits, thus enhancing the availability of 30S subunits on which protein synthesis initiation begins. This Mycoplasmopsis pulmonis (strain UAB CTIP) (Mycoplasma pulmonis) protein is Translation initiation factor IF-3.